The primary structure comprises 494 residues: tRNA (guanine(37)-N(1))-methyltransferase (494 aa).

A mitochondrion-targeting transit peptide spans M1–T32. S-adenosyl-L-methionine-binding positions include H278, D316–L317, D344–G345, and N377. Residues D468–S494 form a disordered region.

Belongs to the class I-like SAM-binding methyltransferase superfamily. TRM5/TYW2 family. Monomer.

It is found in the mitochondrion matrix. The protein resides in the nucleus. The protein localises to the cytoplasm. It carries out the reaction guanosine(37) in tRNA + S-adenosyl-L-methionine = N(1)-methylguanosine(37) in tRNA + S-adenosyl-L-homocysteine + H(+). Involved in mitochondrial tRNA methylation. Specifically methylates the N1 position of guanosine-37 in various tRNAs. Methylation is not dependent on the nature of the nucleoside 5' of the target nucleoside. This is the first step in the biosynthesis of wybutosine (yW), a modified base adjacent to the anticodon of tRNAs and required for accurate decoding. This Xenopus tropicalis (Western clawed frog) protein is tRNA (guanine(37)-N(1))-methyltransferase (trmt5).